Consider the following 161-residue polypeptide: Thy-1 membrane glycoprotein (161 aa).

The N-terminal stretch at Met-1 to Gly-19 is a signal peptide. Position 20 is a pyrrolidone carboxylic acid (Gln-20). The Ig-like V-type domain maps to Gln-20–Lys-126. 2 disulfide bridges follow: Cys-28-Cys-130 and Cys-38-Cys-104. N-linked (GlcNAc...) asparagine glycosylation is found at Asn-42 and Asn-79. Ser-82 carries the post-translational modification Phosphoserine. Asn-119 carries N-linked (GlcNAc...) asparagine glycosylation. The GPI-anchor amidated cysteine; alternate moiety is linked to residue Cys-130. Residues Glu-131–Leu-161 constitute a propeptide, removed in mature form. N-linked (GlcNAc...) asparagine glycosylation occurs at Asn-139.

Its subcellular location is the cell membrane. Its function is as follows. May play a role in cell-cell or cell-ligand interactions during synaptogenesis and other events in the brain. This chain is Thy-1 membrane glycoprotein (THY1), found in Homo sapiens (Human).